The chain runs to 175 residues: Cuticle protein CP1876 (175 aa).

In terms of tissue distribution, calcified shell.

In Cancer pagurus (Rock crab), this protein is Cuticle protein CP1876.